The sequence spans 762 residues: Acyl-homoserine lactone acylase PvdQ (762 aa).

Residues 1 to 23 form the signal peptide; it reads MGMRTVLTGLAGMLLGSMMPVQA. The propeptide at 194–216 is spacer peptide; that stretch reads ALSGEQAFQVAEQRRQRFRLERG. The Nucleophile role is filled by S217.

Belongs to the peptidase S45 family. Heterodimer of an alpha subunit and a beta subunit processed from the same precursor.

Its subcellular location is the periplasm. It carries out the reaction an N-acyl-L-homoserine lactone + H2O = L-homoserine lactone + a carboxylate. In terms of biological role, catalyzes the deacylation of acyl-homoserine lactone (AHL or acyl-HSL), releasing homoserine lactone (HSL) and the corresponding fatty acid. Possesses a specificity for the degradation of long-chain acyl-HSLs (side chains of 11 to 14 carbons in length). Degrades 3-oxo-C12-HSL, one of the two main AHL signal molecules of P.aeruginosa, and thereby functions as a quorum quencher, inhibiting the las quorum-sensing system. Therefore, may enable P.aeruginosa to modulate its own quorum-sensing-dependent pathogenic potential. Also appears to be required for pyoverdin biosynthesis. The chain is Acyl-homoserine lactone acylase PvdQ (pvdQ) from Pseudomonas aeruginosa (strain ATCC 15692 / DSM 22644 / CIP 104116 / JCM 14847 / LMG 12228 / 1C / PRS 101 / PAO1).